Here is a 352-residue protein sequence, read N- to C-terminus: Nicotinate-nucleotide--dimethylbenzimidazole phosphoribosyltransferase (352 aa).

The active-site Proton acceptor is the Glu316.

The protein belongs to the CobT family.

The catalysed reaction is 5,6-dimethylbenzimidazole + nicotinate beta-D-ribonucleotide = alpha-ribazole 5'-phosphate + nicotinate + H(+). The protein operates within nucleoside biosynthesis; alpha-ribazole biosynthesis; alpha-ribazole from 5,6-dimethylbenzimidazole: step 1/2. Catalyzes the synthesis of alpha-ribazole-5'-phosphate from nicotinate mononucleotide (NAMN) and 5,6-dimethylbenzimidazole (DMB). In Clostridium acetobutylicum (strain ATCC 824 / DSM 792 / JCM 1419 / IAM 19013 / LMG 5710 / NBRC 13948 / NRRL B-527 / VKM B-1787 / 2291 / W), this protein is Nicotinate-nucleotide--dimethylbenzimidazole phosphoribosyltransferase.